Reading from the N-terminus, the 422-residue chain is Beta-1,3-galactosyltransferase 2 (422 aa).

Residues 1 to 20 (MLQWRRRHCCFAKMTWSPKR) lie on the Cytoplasmic side of the membrane. A helical; Signal-anchor for type II membrane protein transmembrane segment spans residues 21–43 (SLLRTPLTGVLSLVFLFAMFLFF). At 44 to 422 (NHHDWLPGRP…AGRYRHRKLH (379 aa)) the chain is on the lumenal side. N-linked (GlcNAc...) asparagine glycosylation is found at N75, N98, N119, N176, and N226. The interval 91 to 110 (LRPHTASNSSNTELSPQGVT) is disordered. Positions 95–110 (TASNSSNTELSPQGVT) are enriched in polar residues.

It belongs to the glycosyltransferase 31 family. It depends on Mn(2+) as a cofactor. Detected in brain and heart.

The protein localises to the golgi apparatus membrane. The enzyme catalyses an N-acetyl-beta-D-glucosaminyl derivative + UDP-alpha-D-galactose = a beta-D-galactosyl-(1-&gt;3)-N-acetyl-beta-D-glucosaminyl derivative + UDP + H(+). It catalyses the reaction a beta-D-GlcNAc-(1-&gt;3)-beta-D-Gal-(1-&gt;4)-beta-D-Glc-(1&lt;-&gt;1)-Cer(d18:1(4E)) + UDP-alpha-D-galactose = a beta-D-Gal-(1-&gt;3)-beta-D-GlcNAc-(1-&gt;3)-beta-D-Gal-(1-&gt;4)-beta-D-Glc-(1&lt;-&gt;1')-Cer(d18:1(4E)) + UDP + H(+). It carries out the reaction a neolactoside IV(3)-beta-GlcNAc-nLc4Cer(d18:1(4E)) + UDP-alpha-D-galactose = a neolactoside IV(3)-beta-[Gal-beta-(1-&gt;3)-GlcNAc]-nLc4Cer(d18:1(4E)) + UDP + H(+). Its pathway is protein modification; protein glycosylation. Its function is as follows. Beta-1,3-galactosyltransferase that transfers galactose from UDP-galactose to substrates with a terminal beta-N-acetylglucosamine (beta-GlcNAc) residue. Can also utilize substrates with a terminal galactose residue, albeit with lower efficiency. Involved in the biosynthesis of the carbohydrate moieties of glycolipids and glycoproteins. This Mus musculus (Mouse) protein is Beta-1,3-galactosyltransferase 2.